A 335-amino-acid chain; its full sequence is Glycerol-3-phosphate dehydrogenase [NAD(P)+] (335 aa).

Residues Ser15, Tyr16, His36, and Lys110 each coordinate NADPH. Residues Lys110, Gly139, and Thr141 each contribute to the sn-glycerol 3-phosphate site. Ala143 provides a ligand contact to NADPH. Residues Lys195, Asp248, Ser258, Arg259, and Asn260 each coordinate sn-glycerol 3-phosphate. Lys195 serves as the catalytic Proton acceptor. Arg259 lines the NADPH pocket. Residues Val283 and Glu285 each coordinate NADPH.

The protein belongs to the NAD-dependent glycerol-3-phosphate dehydrogenase family.

It localises to the cytoplasm. It carries out the reaction sn-glycerol 3-phosphate + NAD(+) = dihydroxyacetone phosphate + NADH + H(+). The enzyme catalyses sn-glycerol 3-phosphate + NADP(+) = dihydroxyacetone phosphate + NADPH + H(+). It participates in membrane lipid metabolism; glycerophospholipid metabolism. Its function is as follows. Catalyzes the reduction of the glycolytic intermediate dihydroxyacetone phosphate (DHAP) to sn-glycerol 3-phosphate (G3P), the key precursor for phospholipid synthesis. The polypeptide is Glycerol-3-phosphate dehydrogenase [NAD(P)+] (Mannheimia succiniciproducens (strain KCTC 0769BP / MBEL55E)).